The primary structure comprises 472 residues: PEP-dependent dihydroxyacetone kinase, phosphoryl donor subunit DhaM (472 aa).

In terms of domain architecture, PTS EIIA type-4 spans 1-135 (MVNLVIVSHS…NALEAKRVQL (135 aa)). Residue H9 is the Tele-phosphohistidine intermediate of the active site. The 88-residue stretch at 156–243 (ARSVSVVIQN…ALAAENFGEP (88 aa)) folds into the HPr domain. The active-site Pros-phosphohistidine intermediate is the H170. The interval 266-472 (PQPQDRISRE…DIPGKRVIRG (207 aa)) is PTS EI-like, N-terminal part. H432 functions as the Tele-phosphohistidine intermediate in the catalytic mechanism.

Belongs to the PEP-utilizing enzyme family. As to quaternary structure, homodimer. The dihydroxyacetone kinase complex is composed of a homodimer of DhaM, a homodimer of DhaK and the subunit DhaL.

It catalyses the reaction dihydroxyacetone + phosphoenolpyruvate = dihydroxyacetone phosphate + pyruvate. Its function is as follows. Component of the dihydroxyacetone kinase complex, which is responsible for the phosphoenolpyruvate (PEP)-dependent phosphorylation of dihydroxyacetone. DhaM serves as the phosphoryl donor. Is phosphorylated by phosphoenolpyruvate in an EI- and HPr-dependent reaction, and a phosphorelay system on histidine residues finally leads to phosphoryl transfer to DhaL and dihydroxyacetone. The protein is PEP-dependent dihydroxyacetone kinase, phosphoryl donor subunit DhaM of Klebsiella michiganensis (strain ATCC 8724 / DSM 4798 / JCM 20051 / NBRC 3318 / NRRL B-199 / KCTC 1686 / BUCSAV 143 / CCM 1901).